A 187-amino-acid chain; its full sequence is dTTP/UTP pyrophosphatase (187 aa).

D68 serves as the catalytic Proton acceptor.

This sequence belongs to the Maf family. YhdE subfamily. Requires a divalent metal cation as cofactor.

Its subcellular location is the cytoplasm. It carries out the reaction dTTP + H2O = dTMP + diphosphate + H(+). The catalysed reaction is UTP + H2O = UMP + diphosphate + H(+). Nucleoside triphosphate pyrophosphatase that hydrolyzes dTTP and UTP. May have a dual role in cell division arrest and in preventing the incorporation of modified nucleotides into cellular nucleic acids. This Thermus thermophilus (strain ATCC BAA-163 / DSM 7039 / HB27) protein is dTTP/UTP pyrophosphatase.